The sequence spans 331 residues: D-lactate dehydrogenase (331 aa).

NAD(+)-binding positions include 156-157 (RI), Asp176, 206-207 (MP), 233-235 (TAR), and Asp259. Arg235 is a catalytic residue. Glu264 is an active-site residue. The active-site Proton donor is the His296.

Belongs to the D-isomer specific 2-hydroxyacid dehydrogenase family.

It catalyses the reaction (R)-lactate + NAD(+) = pyruvate + NADH + H(+). The polypeptide is D-lactate dehydrogenase (ldhD) (Treponema pallidum (strain Nichols)).